A 110-amino-acid polypeptide reads, in one-letter code: UPF0060 membrane protein Pmen_1247 (110 aa).

A run of 4 helical transmembrane segments spans residues 5 to 25 (LWFL…WMWL), 31 to 51 (AWWI…LTRV), 59 to 79 (AYAA…ALIE), and 84 to 104 (MLSD…ILFA).

The protein belongs to the UPF0060 family.

The protein localises to the cell inner membrane. The chain is UPF0060 membrane protein Pmen_1247 from Ectopseudomonas mendocina (strain ymp) (Pseudomonas mendocina).